Consider the following 538-residue polypeptide: Bifunctional purine biosynthesis protein PurH (538 aa).

An MGS-like domain is found at 6-158 (KHIPAPDLHR…KNHAYVATVV (153 aa)).

Belongs to the PurH family.

The enzyme catalyses (6R)-10-formyltetrahydrofolate + 5-amino-1-(5-phospho-beta-D-ribosyl)imidazole-4-carboxamide = 5-formamido-1-(5-phospho-D-ribosyl)imidazole-4-carboxamide + (6S)-5,6,7,8-tetrahydrofolate. The catalysed reaction is IMP + H2O = 5-formamido-1-(5-phospho-D-ribosyl)imidazole-4-carboxamide. It participates in purine metabolism; IMP biosynthesis via de novo pathway; 5-formamido-1-(5-phospho-D-ribosyl)imidazole-4-carboxamide from 5-amino-1-(5-phospho-D-ribosyl)imidazole-4-carboxamide (10-formyl THF route): step 1/1. It functions in the pathway purine metabolism; IMP biosynthesis via de novo pathway; IMP from 5-formamido-1-(5-phospho-D-ribosyl)imidazole-4-carboxamide: step 1/1. The chain is Bifunctional purine biosynthesis protein PurH from Brucella melitensis biotype 2 (strain ATCC 23457).